The sequence spans 765 residues: Probable serine/threonine-protein kinase DDB_G0271402 (765 aa).

The region spanning 35–328 (LEFGQEIGKG…KEITERLKSL (294 aa)) is the Protein kinase domain. ATP contacts are provided by residues 41–49 (IGKGAYGKI) and Lys-62. Asp-192 (proton acceptor) is an active-site residue. 7 disordered regions span residues 371-393 (IVHN…NNSN), 443-477 (SMGD…KIIN), 491-527 (SSDL…NNNS), 545-620 (PIQI…QQYQ), 654-684 (PLNI…HHHL), 699-738 (IISS…PTNI), and 746-765 (ASNS…TVQS). The span at 446–458 (DESDLDSDDEDDS) shows a compositional bias: acidic residues. 5 stretches are compositionally biased toward low complexity: residues 459–470 (YTSSASSSRCNS), 499–527 (NGNN…NNNS), 562–605 (PPTS…PKSN), 662–678 (NNNN…GNVN), and 699–720 (IISS…SLTS).

Belongs to the protein kinase superfamily. TKL Ser/Thr protein kinase family.

It carries out the reaction L-seryl-[protein] + ATP = O-phospho-L-seryl-[protein] + ADP + H(+). It catalyses the reaction L-threonyl-[protein] + ATP = O-phospho-L-threonyl-[protein] + ADP + H(+). The sequence is that of Probable serine/threonine-protein kinase DDB_G0271402 from Dictyostelium discoideum (Social amoeba).